The primary structure comprises 310 residues: Receptor homology region, transmembrane domain- and RING domain-containing protein 1 (310 aa).

Positions 1-25 (MRLVVSSCLLVAAPFLSSLLRVSLA) are cleaved as a signal peptide. The Lumenal segment spans residues 26–168 (TVVLNSISAS…NPPDRGSAWT (143 aa)). Cys65 and Cys92 form a disulfide bridge. N-linked (GlcNAc...) asparagine glycosylation is present at Asn75. Residues 81 to 149 (TTKFALIIRG…VAGEILRKYA (69 aa)) form the PA domain. Residues 169-189 (VLAISFFSLLLIVTFLLIAFF) traverse the membrane as a helical segment. The Cytoplasmic portion of the chain corresponds to 190–310 (APRHWTQWRG…FAFAQSSQSR (121 aa)). An RING-type; atypical zinc finger spans residues 232–274 (CAICLEDYRFGESLRLLPCQHAFHLNCIDSWLTKWGTSCPVCK). A compositionally biased stretch (basic and acidic residues) spans 284 to 293 (SEVHKRESPR). The disordered stretch occupies residues 284-310 (SEVHKRESPRTDTSTSRFAFAQSSQSR). Over residues 294–310 (TDTSTSRFAFAQSSQSR) the composition is skewed to polar residues.

In terms of tissue distribution, expressed in leaves, stems, flowers and siliques.

The protein localises to the prevacuolar compartment membrane. The protein resides in the protein storage vacuole membrane. Its subcellular location is the golgi apparatus membrane. In terms of biological role, involved in the trafficking of vacuolar proteins. Functions probably as a sorting receptor for protein trafficking to the protein storage vacuole (PSV) by binding the C-terminal vacuolar sorting determinant (VSD) of vacuolar-sorted proteins. The sequence is that of Receptor homology region, transmembrane domain- and RING domain-containing protein 1 (RMR1) from Arabidopsis thaliana (Mouse-ear cress).